Here is a 137-residue protein sequence, read N- to C-terminus: Nucleoside diphosphate kinase (137 aa).

ATP-binding residues include K9, F57, R85, T91, R102, and N112. Catalysis depends on H115, which acts as the Pros-phosphohistidine intermediate.

The protein belongs to the NDK family. In terms of assembly, homotetramer. Requires Mg(2+) as cofactor.

It is found in the cytoplasm. The catalysed reaction is a 2'-deoxyribonucleoside 5'-diphosphate + ATP = a 2'-deoxyribonucleoside 5'-triphosphate + ADP. The enzyme catalyses a ribonucleoside 5'-diphosphate + ATP = a ribonucleoside 5'-triphosphate + ADP. Functionally, major role in the synthesis of nucleoside triphosphates other than ATP. The ATP gamma phosphate is transferred to the NDP beta phosphate via a ping-pong mechanism, using a phosphorylated active-site intermediate. The chain is Nucleoside diphosphate kinase from Campylobacter jejuni subsp. jejuni serotype O:23/36 (strain 81-176).